Here is a 534-residue protein sequence, read N- to C-terminus: MLQRWLYSTNAKDIAVLYFIFSVFCGMAGTGMSMIIRLELAGPGNQYLGGNHQLFNTLVTGHAILMVFFLVMPALIGGFGNYLLPLMIGASDMSYPRLNNISFWLLPPALVCLVTSTLVESGAGTGWTVYAPLSGIQSHSGPSVDLAIFALHMTSISSLLGAINFIVTTLNMRTNGMSMHKMPLFVWAIFITAFLLLLSLPVLSAGVTLLLMDRNFNTSFYEVAGGGDPVLYQHLFWFFGHPEVYIMIVPAFGVISHIVSTYSKKPVFGEISMVYAMASIGLLGFLVWSHHMYVVGLDCDTRAYFTSATMIIAIPTGIKIFSWLATIYGGSIRLAVPMMYAIAFLFLFTLGGFTGVALANASLDVAFHDTYYVVAHFHYVLSMGAVFSMFAGYYYWSPHILGLNYNEKLAQIQFWLIFVGVNVIFLPMHFLGINGMPRRIPDYPDAFAGWNYVSSIGSFIAMISLILFIYILFDQLYNGLENKINNKSVTFMKAPDFVESNNKFNLNTIKTSSIEFLLNSPPAVHSFNTPAVTN.

The chain crosses the membrane as a helical span at residues 16 to 36 (VLYFIFSVFCGMAGTGMSMII). The Ca(2+) site is built by Glu-39 and Gly-44. His-62 contributes to the Fe(II)-heme a binding site. 6 helical membrane passes run 64–84 (ILMV…NYLL), 101–121 (ISFW…LVES), 147–167 (AIFA…NFIV), 183–203 (PLFV…LPVL), 235–255 (LFWF…FGVI), and 267–287 (VFGE…GFLV). A Cu cation-binding site is contributed by His-241. Residues 241 to 245 (HPEVY) constitute a cross-link (1'-histidyl-3'-tyrosine (His-Tyr)). An O2-binding site is contributed by Tyr-245. The Cu cation site is built by His-290 and His-291. Transmembrane regions (helical) follow at residues 310 to 330 (MIIA…IYGG) and 338 to 358 (MMYA…GVAL). Mg(2+) is bound by residues His-368 and Asp-369. Transmembrane regions (helical) follow at residues 372 to 392 (YVVA…MFAG) and 414 to 434 (FWLI…LGIN). Heme a3 is bound at residue His-376. Residue His-378 participates in Fe(II)-heme a binding. Pro-441 contributes to the Ca(2+) binding site. A helical membrane pass occupies residues 453 to 473 (VSSIGSFIAMISLILFIYILF).

Belongs to the heme-copper respiratory oxidase family. In terms of assembly, component of the cytochrome c oxidase (complex IV, CIV), a multisubunit enzyme composed of a catalytic core of 3 subunits and several supernumerary subunits. The complex exists as a monomer or a dimer and forms supercomplexes (SCs) in the inner mitochondrial membrane with ubiquinol-cytochrome c oxidoreductase (cytochrome b-c1 complex, complex III, CIII). Heme is required as a cofactor. It depends on Cu cation as a cofactor.

The protein resides in the mitochondrion inner membrane. The catalysed reaction is 4 Fe(II)-[cytochrome c] + O2 + 8 H(+)(in) = 4 Fe(III)-[cytochrome c] + 2 H2O + 4 H(+)(out). It participates in energy metabolism; oxidative phosphorylation. In terms of biological role, component of the cytochrome c oxidase, the last enzyme in the mitochondrial electron transport chain which drives oxidative phosphorylation. The respiratory chain contains 3 multisubunit complexes succinate dehydrogenase (complex II, CII), ubiquinol-cytochrome c oxidoreductase (cytochrome b-c1 complex, complex III, CIII) and cytochrome c oxidase (complex IV, CIV), that cooperate to transfer electrons derived from NADH and succinate to molecular oxygen, creating an electrochemical gradient over the inner membrane that drives transmembrane transport and the ATP synthase. Cytochrome c oxidase is the component of the respiratory chain that catalyzes the reduction of oxygen to water. Electrons originating from reduced cytochrome c in the intermembrane space (IMS) are transferred via the dinuclear copper A center (CU(A)) of subunit 2 and heme A of subunit 1 to the active site in subunit 1, a binuclear center (BNC) formed by heme A3 and copper B (CU(B)). The BNC reduces molecular oxygen to 2 water molecules using 4 electrons from cytochrome c in the IMS and 4 protons from the mitochondrial matrix. This is Cytochrome c oxidase subunit 1 (COX1) from Vanderwaltozyma polyspora (strain ATCC 22028 / DSM 70294 / BCRC 21397 / CBS 2163 / NBRC 10782 / NRRL Y-8283 / UCD 57-17) (Kluyveromyces polysporus).